Reading from the N-terminus, the 53-residue chain is UPF0181 protein VC_A0569 (53 aa).

It belongs to the UPF0181 family.

The sequence is that of UPF0181 protein VC_A0569 from Vibrio cholerae serotype O1 (strain ATCC 39315 / El Tor Inaba N16961).